Here is a 343-residue protein sequence, read N- to C-terminus: L-threonine 3-dehydrogenase (343 aa).

Zn(2+) is bound at residue cysteine 38. Active-site charge relay system residues include threonine 40 and histidine 43. The Zn(2+) site is built by histidine 63, glutamate 64, cysteine 93, cysteine 96, cysteine 99, and cysteine 107. Residues isoleucine 175, aspartate 195, arginine 200, 262 to 264 (LGI), and 286 to 287 (IY) each bind NAD(+).

This sequence belongs to the zinc-containing alcohol dehydrogenase family. As to quaternary structure, homotetramer. It depends on Zn(2+) as a cofactor.

The protein localises to the cytoplasm. The catalysed reaction is L-threonine + NAD(+) = (2S)-2-amino-3-oxobutanoate + NADH + H(+). It functions in the pathway amino-acid degradation; L-threonine degradation via oxydo-reductase pathway; glycine from L-threonine: step 1/2. Functionally, catalyzes the NAD(+)-dependent oxidation of L-threonine to 2-amino-3-ketobutyrate. This is L-threonine 3-dehydrogenase from Burkholderia thailandensis (strain ATCC 700388 / DSM 13276 / CCUG 48851 / CIP 106301 / E264).